We begin with the raw amino-acid sequence, 273 residues long: Peptide deformylase 1B, chloroplastic/mitochondrial (273 aa).

The transit peptide at 1–56 (MAVCNCFLQAPPLSRILLPVLSRRATTLSAGYGRLKSTVTFCSTVNRTSPLTSSVR) directs the protein to the chloroplast and mitochondrion. The Fe cation site is built by C171 and H213. Residue E214 is part of the active site. H217 contacts Fe cation. Basic and acidic residues predominate over residues 246 to 261 (YEEKTGLPSPERVEAR). The disordered stretch occupies residues 246–273 (YEEKTGLPSPERVEARQKRKAGVGFGKR). The span at 262–273 (QKRKAGVGFGKR) shows a compositional bias: basic residues.

This sequence belongs to the polypeptide deformylase family. As to quaternary structure, homodimer. It depends on Fe(2+) as a cofactor. As to expression, expressed in leaves and flowers.

The protein localises to the plastid. It localises to the chloroplast stroma. The protein resides in the mitochondrion. The enzyme catalyses N-terminal N-formyl-L-methionyl-[peptide] + H2O = N-terminal L-methionyl-[peptide] + formate. With respect to regulation, inhibited by actinonin. Removes the formyl group from the N-terminal Met of newly synthesized proteins. Has a preferred substrate specificity towards the photosystem II (PS II) D1 polypeptide. The polypeptide is Peptide deformylase 1B, chloroplastic/mitochondrial (PDF1B) (Arabidopsis thaliana (Mouse-ear cress)).